Here is a 266-residue protein sequence, read N- to C-terminus: ATG8-interacting protein 2 (266 aa).

The AIM (Atg8-family-interacting motif) signature appears at 14-17 (WEVV). Residues 191–210 (TNTVWSICIAAAVMGIVILG) traverse the membrane as a helical segment. The AIM (Atg8-family-interacting motif) motif lies at 218 to 221 (WQIL).

In terms of assembly, interacts with ATG8F.

It is found in the endoplasmic reticulum membrane. Its subcellular location is the membrane. In terms of biological role, may be involved in salt stress-induced vesicle-to-vacuole trafficking pathway. Through its interaction with ATG8F, may enable delivery of the vesicle bodies to the vacuole by an autophagic pathway. Plays a role in seed germination in response to exogenous abscisic acid (ABA) treatment. This chain is ATG8-interacting protein 2, found in Arabidopsis thaliana (Mouse-ear cress).